The following is a 630-amino-acid chain: Glutathione hydrolase proenzyme 1 (630 aa).

Over 1–49 the chain is Cytoplasmic; the sequence is MGINTSSAQSSGAASIARSSVNVKSGNRHLSSNKKSATSALEERASRPS. The helical; Signal-anchor for type II membrane protein transmembrane segment at 50-70 threads the bilayer; sequence ILVTFLVLAGTILSLYIWPIL. Residues 71-630 are Lumenal-facing; sequence SPDLFFANQR…SRKQAVAAAY (560 aa). A glycan (N-linked (GlcNAc...) asparagine) is linked at Asn156. Arg165 provides a ligand contact to L-glutamate. Residues Asn180, Asn315, Asn397, and Asn417 are each glycosylated (N-linked (GlcNAc...) asparagine). The Nucleophile role is filled by Thr441. L-glutamate is bound by residues Ser459, Asn461, Asp483, 511 to 512, and 532 to 533; these read SS and GG. An N-linked (GlcNAc...) asparagine glycan is attached at Asn612.

This sequence belongs to the gamma-glutamyltransferase family. As to quaternary structure, heterodimer composed of the light and heavy chains. The active site is located in the light chain. In terms of processing, cleaved by autocatalysis into a large and a small subunit.

It localises to the endoplasmic reticulum membrane. It catalyses the reaction an N-terminal (5-L-glutamyl)-[peptide] + an alpha-amino acid = 5-L-glutamyl amino acid + an N-terminal L-alpha-aminoacyl-[peptide]. The catalysed reaction is glutathione + H2O = L-cysteinylglycine + L-glutamate. The enzyme catalyses an S-substituted glutathione + H2O = an S-substituted L-cysteinylglycine + L-glutamate. It functions in the pathway sulfur metabolism; glutathione metabolism. Catalyzes the transfer of the gamma-glutamyl moiety of glutathione (GSH) and other gamma-glutamyl compounds to amino acids and peptides. Major GSH-degrading enzyme, catalyzing the hydrolytic release of L-glutamate from GSH. The sequence is that of Glutathione hydrolase proenzyme 1 (ggt1) from Schizosaccharomyces pombe (strain 972 / ATCC 24843) (Fission yeast).